Here is a 237-residue protein sequence, read N- to C-terminus: CD209 antigen-like protein D (237 aa).

The Cytoplasmic segment spans residues 1 to 54 (MSDSMESKTQQVVIPEDEECLMSGTRYSDISSRLQTKFGIKSLAEYTKQSRNPL). Residues 55–75 (VLQLLSFLFLAGLLLIILILV) traverse the membrane as a helical; Signal-anchor for type II membrane protein segment. The Extracellular portion of the chain corresponds to 76 to 237 (SKVPSSEVQN…KVSTSSCTTK (162 aa)). Cysteine 106 and cysteine 117 are oxidised to a cystine. Residues 112–227 (FFNGSCYFFS…CDKLLFWICK (116 aa)) enclose the C-type lectin domain. Residues asparagine 114 and asparagine 129 are each glycosylated (N-linked (GlcNAc...) asparagine). Intrachain disulfides connect cysteine 134-cysteine 226 and cysteine 205-cysteine 218. The Ca(2+) site is built by glutamate 196, asparagine 198, glutamate 203, asparagine 214, and aspartate 215.

The protein resides in the membrane. In terms of biological role, probable pathogen-recognition receptor. May mediate the endocytosis of pathogens which are subsequently degraded in lysosomal compartments. May recognize in a calcium-dependent manner high mannose N-linked oligosaccharides in a variety of pathogen antigens. In Mus musculus (Mouse), this protein is CD209 antigen-like protein D (Cd209d).